Here is a 573-residue protein sequence, read N- to C-terminus: DNA ligase (573 aa).

Position 250 (E250) interacts with ATP. The active-site N6-AMP-lysine intermediate is the K252. Positions 257, 272, 301, 342, 432, and 438 each coordinate ATP.

The protein belongs to the ATP-dependent DNA ligase family. Mg(2+) serves as cofactor.

The enzyme catalyses ATP + (deoxyribonucleotide)n-3'-hydroxyl + 5'-phospho-(deoxyribonucleotide)m = (deoxyribonucleotide)n+m + AMP + diphosphate.. Functionally, DNA ligase that seals nicks in double-stranded DNA during DNA replication, DNA recombination and DNA repair. This Methanococcus vannielii (strain ATCC 35089 / DSM 1224 / JCM 13029 / OCM 148 / SB) protein is DNA ligase.